The chain runs to 965 residues: Isoleucine--tRNA ligase (965 aa).

The 'HIGH' region signature appears at 68 to 78 (PYANGSLHMGH). An L-isoleucyl-5'-AMP-binding site is contributed by E582. The short motif at 623–627 (KMSKS) is the 'KMSKS' region element. Residue K626 coordinates ATP. Zn(2+) contacts are provided by C936, C939, C956, and C959.

Belongs to the class-I aminoacyl-tRNA synthetase family. IleS type 1 subfamily. As to quaternary structure, monomer. The cofactor is Zn(2+).

It is found in the cytoplasm. The catalysed reaction is tRNA(Ile) + L-isoleucine + ATP = L-isoleucyl-tRNA(Ile) + AMP + diphosphate. Functionally, catalyzes the attachment of isoleucine to tRNA(Ile). As IleRS can inadvertently accommodate and process structurally similar amino acids such as valine, to avoid such errors it has two additional distinct tRNA(Ile)-dependent editing activities. One activity is designated as 'pretransfer' editing and involves the hydrolysis of activated Val-AMP. The other activity is designated 'posttransfer' editing and involves deacylation of mischarged Val-tRNA(Ile). This Prochlorococcus marinus subsp. pastoris (strain CCMP1986 / NIES-2087 / MED4) protein is Isoleucine--tRNA ligase.